The primary structure comprises 783 residues: Probable alpha,alpha-trehalose-phosphate synthase [UDP-forming] 3 (783 aa).

Residues 11-456 (QTLLVVANRL…GFDFLSELND (446 aa)) form a glycosyltransferase region.

It in the N-terminal section; belongs to the glycosyltransferase 20 family. In the C-terminal section; belongs to the trehalose phosphatase family.

It catalyses the reaction D-glucose 6-phosphate + UDP-alpha-D-glucose = alpha,alpha-trehalose 6-phosphate + UDP + H(+). This Arabidopsis thaliana (Mouse-ear cress) protein is Probable alpha,alpha-trehalose-phosphate synthase [UDP-forming] 3 (TPS3).